Here is a 183-residue protein sequence, read N- to C-terminus: Potassium-transporting ATPase KdpC subunit (183 aa).

A helical membrane pass occupies residues alanine 10–isoleucine 30.

The protein belongs to the KdpC family. As to quaternary structure, the system is composed of three essential subunits: KdpA, KdpB and KdpC.

It is found in the cell inner membrane. Part of the high-affinity ATP-driven potassium transport (or Kdp) system, which catalyzes the hydrolysis of ATP coupled with the electrogenic transport of potassium into the cytoplasm. This subunit acts as a catalytic chaperone that increases the ATP-binding affinity of the ATP-hydrolyzing subunit KdpB by the formation of a transient KdpB/KdpC/ATP ternary complex. This chain is Potassium-transporting ATPase KdpC subunit, found in Pseudomonas aeruginosa (strain ATCC 15692 / DSM 22644 / CIP 104116 / JCM 14847 / LMG 12228 / 1C / PRS 101 / PAO1).